Here is a 335-residue protein sequence, read N- to C-terminus: UPF0353 protein NFA_34780 (335 aa).

2 helical membrane-spanning segments follow: residues 8–28 and 61–81; these read ALIWLGFLAVVALIALGYVLV and IALMLVGLVFLTIAAAGPTSV. In terms of domain architecture, VWFA spans 90-295; that stretch reads TVVLVMDVSL…EELTAVYDTL (206 aa). A helical transmembrane segment spans residues 310–330; the sequence is RPWLLLGMLVVAAGIVTGLLY.

It belongs to the UPF0353 family.

Its subcellular location is the cell membrane. The chain is UPF0353 protein NFA_34780 from Nocardia farcinica (strain IFM 10152).